We begin with the raw amino-acid sequence, 454 residues long: Bifunctional protein GlmU (454 aa).

The tract at residues 1–228 (MTLPLHVVIL…PQDVEGANDP (228 aa)) is pyrophosphorylase. Residues 10–13 (LAAG), lysine 24, glutamine 76, 81–82 (GT), 103–105 (YGD), glycine 138, glutamate 153, asparagine 168, and asparagine 226 each bind UDP-N-acetyl-alpha-D-glucosamine. Aspartate 105 serves as a coordination point for Mg(2+). Asparagine 226 is a Mg(2+) binding site. The tract at residues 229-249 (WQLAQLERAWQLRAARALCLQ) is linker. The interval 250-454 (GVRMADPARV…IEGWERPKKK (205 aa)) is N-acetyltransferase. Arginine 332 and lysine 350 together coordinate UDP-N-acetyl-alpha-D-glucosamine. Histidine 362 (proton acceptor) is an active-site residue. UDP-N-acetyl-alpha-D-glucosamine-binding residues include tyrosine 365 and asparagine 376. Acetyl-CoA contacts are provided by residues alanine 379, 385 to 386 (NY), serine 404, alanine 422, and arginine 439.

The protein in the N-terminal section; belongs to the N-acetylglucosamine-1-phosphate uridyltransferase family. This sequence in the C-terminal section; belongs to the transferase hexapeptide repeat family. Homotrimer. Requires Mg(2+) as cofactor.

It is found in the cytoplasm. The catalysed reaction is alpha-D-glucosamine 1-phosphate + acetyl-CoA = N-acetyl-alpha-D-glucosamine 1-phosphate + CoA + H(+). It carries out the reaction N-acetyl-alpha-D-glucosamine 1-phosphate + UTP + H(+) = UDP-N-acetyl-alpha-D-glucosamine + diphosphate. Its pathway is nucleotide-sugar biosynthesis; UDP-N-acetyl-alpha-D-glucosamine biosynthesis; N-acetyl-alpha-D-glucosamine 1-phosphate from alpha-D-glucosamine 6-phosphate (route II): step 2/2. It participates in nucleotide-sugar biosynthesis; UDP-N-acetyl-alpha-D-glucosamine biosynthesis; UDP-N-acetyl-alpha-D-glucosamine from N-acetyl-alpha-D-glucosamine 1-phosphate: step 1/1. The protein operates within bacterial outer membrane biogenesis; LPS lipid A biosynthesis. Its function is as follows. Catalyzes the last two sequential reactions in the de novo biosynthetic pathway for UDP-N-acetylglucosamine (UDP-GlcNAc). The C-terminal domain catalyzes the transfer of acetyl group from acetyl coenzyme A to glucosamine-1-phosphate (GlcN-1-P) to produce N-acetylglucosamine-1-phosphate (GlcNAc-1-P), which is converted into UDP-GlcNAc by the transfer of uridine 5-monophosphate (from uridine 5-triphosphate), a reaction catalyzed by the N-terminal domain. This is Bifunctional protein GlmU from Xanthomonas campestris pv. campestris (strain 8004).